A 586-amino-acid polypeptide reads, in one-letter code: UvrABC system protein C (586 aa).

Residues histidine 17 to leucine 94 form the GIY-YIG domain. Residues glutamate 201–leucine 236 form the UVR domain.

It belongs to the UvrC family. In terms of assembly, interacts with UvrB in an incision complex.

It is found in the cytoplasm. The UvrABC repair system catalyzes the recognition and processing of DNA lesions. UvrC both incises the 5' and 3' sides of the lesion. The N-terminal half is responsible for the 3' incision and the C-terminal half is responsible for the 5' incision. The sequence is that of UvrABC system protein C from Mycoplasma pneumoniae (strain ATCC 29342 / M129 / Subtype 1) (Mycoplasmoides pneumoniae).